Consider the following 454-residue polypeptide: tRNA modification GTPase MnmE (454 aa).

3 residues coordinate (6S)-5-formyl-5,6,7,8-tetrahydrofolate: Arg23, Glu80, and Lys120. The TrmE-type G domain maps to 216–377; that stretch reads GMKVVIAGRP…LRDHLKSSMG (162 aa). Asn226 is a K(+) binding site. GTP-binding positions include 226-231, 245-251, 270-273, 335-338, and 358-360; these read NAGKSS, TDIAGTT, DTAG, NKAD, and SAR. Ser230 is a Mg(2+) binding site. K(+)-binding residues include Thr245, Ile247, and Thr250. A Mg(2+)-binding site is contributed by Thr251. Lys454 lines the (6S)-5-formyl-5,6,7,8-tetrahydrofolate pocket.

Belongs to the TRAFAC class TrmE-Era-EngA-EngB-Septin-like GTPase superfamily. TrmE GTPase family. In terms of assembly, homodimer. Heterotetramer of two MnmE and two MnmG subunits. It depends on K(+) as a cofactor.

Its subcellular location is the cytoplasm. Functionally, exhibits a very high intrinsic GTPase hydrolysis rate. Involved in the addition of a carboxymethylaminomethyl (cmnm) group at the wobble position (U34) of certain tRNAs, forming tRNA-cmnm(5)s(2)U34. This is tRNA modification GTPase MnmE from Erwinia tasmaniensis (strain DSM 17950 / CFBP 7177 / CIP 109463 / NCPPB 4357 / Et1/99).